Here is a 471-residue protein sequence, read N- to C-terminus: ATP synthase subunit beta (471 aa).

159-166 contacts ATP; that stretch reads GGAGVGKT.

Belongs to the ATPase alpha/beta chains family. As to quaternary structure, F-type ATPases have 2 components, CF(1) - the catalytic core - and CF(0) - the membrane proton channel. CF(1) has five subunits: alpha(3), beta(3), gamma(1), delta(1), epsilon(1). CF(0) has four main subunits: a(1), b(1), b'(1) and c(9-12).

It localises to the cell membrane. The enzyme catalyses ATP + H2O + 4 H(+)(in) = ADP + phosphate + 5 H(+)(out). Produces ATP from ADP in the presence of a proton gradient across the membrane. The catalytic sites are hosted primarily by the beta subunits. This is ATP synthase subunit beta from Heliobacterium modesticaldum (strain ATCC 51547 / Ice1).